Consider the following 849-residue polypeptide: Coiled-coil domain-containing protein 87 (849 aa).

A coiled-coil region spans residues 387-415 (RHPAAGHRLEELEKMLRNLQEEEASGQWD).

Belongs to the CCDC87 family.

Plays a role in spermatogenesis, where it is important for normal sperm head morphology. Also required for the acrosome reaction and thus normal male fertility. The sequence is that of Coiled-coil domain-containing protein 87 (CCDC87) from Homo sapiens (Human).